A 595-amino-acid chain; its full sequence is MDDRSLKLAEDFVSARYIEAGRESLRATARIMRSILAQRCCPDEGLTDAAIELILRQLSLMDTNNLAHHVGGGEREGRVVSALVRMRHFHLTHGIGRSGDLFSEQPKAAGSSLLYKITNVLMLDLIRQAGAPSTAAAVVVPMATGMTLALVLRCVAKTHMKELMKEAEAVQLQRTVTKDSTSATSAAPVQEPPMSEADRDRHDRTSLPVPATPRYVIWPRIDQKTALKCIDAAGLVPVPVQLRPAVPLARSAAPCVSTNRDSLDRGQDSIGSPSTPTSSSSLFLECHVDDVAAAVNAVGGPSQVVCVLSTTSCFAPRLPDNTVAIAQYCKKAGIPYVVNNAYGVQSRRIMTRLDAAQRLGRVDFVVQSGDKNFLVPVGGSIICSGDKERCKAVAALYAGRASMSPIVDLFITALSLGRRGMQTLWSDRYKCRARLIRQLRVFARERREVLLVDDSDDDKADEDTVGGSQRTSNAVVPRNDISVAVTMRAYGLPAAEASSSGAQLGSEQAGRVTNWAAARALGAQLFRSAVTGPRVITPAPSTPTTIAGCTFRNYGMHQDREPPCPLLVIACGIGMSESEVDALMARLRDLWPVPA.

Residue Arg75 participates in pyridoxal 5'-phosphate binding. The phosphate loop (P-loop) stretch occupies residues 96 to 106 (GRSGDLFSEQP). Substrate-binding residues include Arg97, Ser98, and Gln105. The span at 174–187 (RTVTKDSTSATSAA) shows a compositional bias: polar residues. Disordered regions lie at residues 174–208 (RTVTKDSTSATSAAPVQEPPMSEADRDRHDRTSLP) and 257–278 (STNRDSLDRGQDSIGSPSTPTS). Residues 196–205 (EADRDRHDRT) are compositionally biased toward basic and acidic residues. Arg358 contributes to the tRNA binding site. Lys371 carries the post-translational modification N6-(pyridoxal phosphate)lysine. Arg400 is a substrate binding site.

It belongs to the SepSecS family. As to quaternary structure, homotetramer composed of two homodimers. Pyridoxal 5'-phosphate serves as cofactor.

It localises to the cytoplasm. It carries out the reaction O-phospho-L-seryl-tRNA(Sec) + selenophosphate + H2O = L-selenocysteinyl-tRNA(Sec) + 2 phosphate. Its pathway is aminoacyl-tRNA biosynthesis; selenocysteinyl-tRNA(Sec) biosynthesis; selenocysteinyl-tRNA(Sec) from L-seryl-tRNA(Sec) (archaeal/eukaryal route): step 2/2. Its function is as follows. Converts O-phosphoseryl-tRNA(Sec) to selenocysteinyl-tRNA(Sec) required for selenoprotein biosynthesis. The polypeptide is O-phosphoseryl-tRNA(Sec) selenium transferase (Leishmania donovani).